Reading from the N-terminus, the 487-residue chain is Transcriptional adapter ADA2b (487 aa).

Polar residues predominate over residues 1–13; the sequence is MGRSRGNFQNFED. The segment at 1–25 is disordered; the sequence is MGRSRGNFQNFEDPTQRTRKKKNAA. The segment at 42–98 adopts a ZZ-type zinc-finger fold; that stretch reads GGKYNCDYCQKDITGKIRIKCAVCPDFDLCIECMSVGAEITPHKCDHPYRVMGNLTF. The Zn(2+) site is built by Cys-47, Cys-50, Cys-62, Cys-65, Cys-71, Cys-74, His-84, and His-88. The SANT domain occupies 100–152; that stretch reads LICPDWSADDEMLLLEGLEIYGLGNWAEVAEHVGTKSKEQCLEHYRNIYLNSP. Lys-216 carries the post-translational modification N6-acetyllysine; by GCN5. Residues 368-383 are compositionally biased toward basic and acidic residues; that stretch reads RKRKRENEEGMNRGKE. Positions 368-388 are disordered; sequence RKRKRENEEGMNRGKESGQFG. One can recognise an SWIRM domain in the interval 401-487; it reads QASSSYVNDL…MLVKKGIAQL (87 aa).

Interacts in vitro with the HAT domain of GCN5 and with the DNA-binding domain of the transcriptional activator DREB1B/CBF1. Interacts with BZIP11. Post-translationally, acetylated in vitro by GCN5, but acetylation is not essential for biological activity. In terms of tissue distribution, expressed in roots, leaves, stems, flowers and siliques, with the strongest activity in the meristematic zones.

Its subcellular location is the nucleus. In terms of biological role, required for the function of some acidic activation domains, which activate transcription from a distant site. The exact mechanism of action is not yet known. ADA2 stimulates the acetyltransferase activity of GCN5 on free histones or nucleosomes, probably by opening up the promoter region. Mediates auxin and cytokinin signals in the control of cell proliferation and might be involved in repression of a freezing tolerance pathway at warm temperature. Involved in the positive regulation of salt-induced gene expression by maintaining locus-specific acetylation of histones H4 and H3. In Arabidopsis thaliana (Mouse-ear cress), this protein is Transcriptional adapter ADA2b (ADA2B).